The primary structure comprises 426 residues: 3-phosphoshikimate 1-carboxyvinyltransferase (426 aa).

Positions 22, 23, and 27 each coordinate 3-phosphoshikimate. Residue K22 coordinates phosphoenolpyruvate. Positions 96 and 124 each coordinate phosphoenolpyruvate. The 3-phosphoshikimate site is built by S170 and S171. A phosphoenolpyruvate-binding site is contributed by Q172. Positions 198, 314, 337, and 341 each coordinate 3-phosphoshikimate. D314 functions as the Proton acceptor in the catalytic mechanism. The phosphoenolpyruvate site is built by R345, R387, and K412.

This sequence belongs to the EPSP synthase family. As to quaternary structure, homotetramer.

The protein resides in the cytoplasm. It carries out the reaction 3-phosphoshikimate + phosphoenolpyruvate = 5-O-(1-carboxyvinyl)-3-phosphoshikimate + phosphate. The protein operates within metabolic intermediate biosynthesis; chorismate biosynthesis; chorismate from D-erythrose 4-phosphate and phosphoenolpyruvate: step 6/7. Its function is as follows. Catalyzes the transfer of the enolpyruvyl moiety of phosphoenolpyruvate (PEP) to the 5-hydroxyl of shikimate-3-phosphate (S3P) to produce enolpyruvyl shikimate-3-phosphate and inorganic phosphate. This Vibrio cholerae serotype O1 (strain ATCC 39315 / El Tor Inaba N16961) protein is 3-phosphoshikimate 1-carboxyvinyltransferase.